A 462-amino-acid chain; its full sequence is Keratin, type I cytoskeletal 28 (462 aa).

Residues 1-26 are disordered; sequence MSLRFSGGSRHVGIQSGSLRPPSGGA. Residues 1–83 are head; it reads MSLRFSGGSR…GSEGGLLSGN (83 aa). The tract at residues 84-119 is coil 1A; the sequence is EKVTMQNLNNRLASYLDNVKALEEANSELERKIKTW. The 316-residue stretch at 84–399 folds into the IF rod domain; sequence EKVTMQNLNN…RLIDGDENSC (316 aa). Residues 120-141 are linker 1; that stretch reads HEKYGPGSCRGLDRDYSKYHLT. The interval 142–233 is coil 1B; sequence IEDLKSKIIS…KNHEEEMKVL (92 aa). The tract at residues 234 to 256 is linker 12; it reads QCAAGGNVNVEMNAAPGVDLTVL. Positions 257 to 395 are coil 2; that stretch reads LNNMRAEYEA…ETYCRLIDGD (139 aa). The interval 396 to 462 is tail; that stretch reads ENSCSVSKGF…NGKAEQRVPF (67 aa).

The protein belongs to the intermediate filament family. Heterotetramer of two type I and two type II keratins. In terms of tissue distribution, in the hair follicle and bulb, uniformly expressed in all three layers of the inner root sheath (the Henle layer, the Huxley layer and the cuticle) and observed in matrix cells (at protein level).

It localises to the cytoplasm. Its function is as follows. Essential for the proper assembly of types I and II keratin protein complexes and the formation of keratin intermediate filaments in the inner root sheath (irs). This is Keratin, type I cytoskeletal 28 from Mus musculus (Mouse).